The sequence spans 505 residues: Aspartyl/glutamyl-tRNA(Asn/Gln) amidotransferase subunit B (505 aa).

The protein belongs to the GatB/GatE family. GatB subfamily. Heterotrimer of A, B and C subunits.

The enzyme catalyses L-glutamyl-tRNA(Gln) + L-glutamine + ATP + H2O = L-glutaminyl-tRNA(Gln) + L-glutamate + ADP + phosphate + H(+). It catalyses the reaction L-aspartyl-tRNA(Asn) + L-glutamine + ATP + H2O = L-asparaginyl-tRNA(Asn) + L-glutamate + ADP + phosphate + 2 H(+). Functionally, allows the formation of correctly charged Asn-tRNA(Asn) or Gln-tRNA(Gln) through the transamidation of misacylated Asp-tRNA(Asn) or Glu-tRNA(Gln) in organisms which lack either or both of asparaginyl-tRNA or glutaminyl-tRNA synthetases. The reaction takes place in the presence of glutamine and ATP through an activated phospho-Asp-tRNA(Asn) or phospho-Glu-tRNA(Gln). The polypeptide is Aspartyl/glutamyl-tRNA(Asn/Gln) amidotransferase subunit B (Dinoroseobacter shibae (strain DSM 16493 / NCIMB 14021 / DFL 12)).